We begin with the raw amino-acid sequence, 82 residues long: MLVLTRKLKEAIQIGDDIEITVLVIQGDQVKLGINAPKHVEIHRKEIYLAIQAENNAASFASKTSLERLTEQLKHLKGGKQA.

It belongs to the CsrA/RsmA family. As to quaternary structure, homodimer; the beta-strands of each monomer intercalate to form a hydrophobic core, while the alpha-helices form wings that extend away from the core.

It localises to the cytoplasm. Its function is as follows. A translational regulator that binds mRNA to regulate translation initiation and/or mRNA stability. Usually binds in the 5'-UTR at or near the Shine-Dalgarno sequence preventing ribosome-binding, thus repressing translation. Its main target seems to be the major flagellin gene, while its function is anatagonized by FliW. This Geobacillus kaustophilus (strain HTA426) protein is Translational regulator CsrA.